The primary structure comprises 159 residues: ATP-dependent Clp protease adapter protein CLPS1, chloroplastic (159 aa).

Residues 1–44 (METAICGRLALAPSSLFNSKSGDKHLVSKGPCVNRSILMTLSTS) constitute a chloroplast transit peptide.

Belongs to the ClpS family. As to quaternary structure, interacts with CLPC1 (via N-terminus) and CLPC2, but not with CLPt1 or CLPT2. Binds to ClpF; this interaction stimulates their association with ClpC. In terms of tissue distribution, expressed exclusively in photosynthetic green tissues with high levels in young, developing leaf tissues.

It is found in the plastid. Its subcellular location is the chloroplast stroma. Its function is as follows. Small adapter protein that modulate the activity of CLPC. Involved in plastid biogenesis in particular when chloroplast protein synthesis capacity is a limiting factor. Probably involved in substrate selection for plastid Clp protease system. Recruitment to ClpC chaperones is facilitated by CLPF thus forming a binary adapter for selective substrate recognition and delivery to plastid Clp protease system (CLPC). In Arabidopsis thaliana (Mouse-ear cress), this protein is ATP-dependent Clp protease adapter protein CLPS1, chloroplastic.